The following is a 153-amino-acid chain: Guanyl-specific ribonuclease N1 (153 aa).

Positions 1-20 (MVQLLSAFVSLLSVVAVSGA) are cleaved as a signal peptide. Positions 21–49 (AIPAPAPEAVVDVAPETATIEPTGNFTAQ) are excised as a propeptide. Cystine bridges form between Cys51–Cys59 and Cys55–Cys152. Residue His89 is part of the active site. Residue Glu107 is the Proton acceptor of the active site. Catalysis depends on His141, which acts as the Proton donor.

It belongs to the ribonuclease N1/T1 family.

It catalyses the reaction [RNA] containing guanosine + H2O = an [RNA fragment]-3'-guanosine-3'-phosphate + a 5'-hydroxy-ribonucleotide-3'-[RNA fragment].. The chain is Guanyl-specific ribonuclease N1 (grn) from Neurospora crassa (strain ATCC 24698 / 74-OR23-1A / CBS 708.71 / DSM 1257 / FGSC 987).